Consider the following 464-residue polypeptide: Glutamate--tRNA ligase (464 aa).

The 'HIGH' region motif lies at 9 to 19 (PSPTGYLHIGG). The short motif at 242-246 (KISKR) is the 'KMSKS' region element. Residue Lys-245 coordinates ATP.

Belongs to the class-I aminoacyl-tRNA synthetase family. Glutamate--tRNA ligase type 1 subfamily. In terms of assembly, monomer.

It is found in the cytoplasm. The catalysed reaction is tRNA(Glu) + L-glutamate + ATP = L-glutamyl-tRNA(Glu) + AMP + diphosphate. Catalyzes the attachment of glutamate to tRNA(Glu) in a two-step reaction: glutamate is first activated by ATP to form Glu-AMP and then transferred to the acceptor end of tRNA(Glu). The polypeptide is Glutamate--tRNA ligase (Neisseria meningitidis serogroup C / serotype 2a (strain ATCC 700532 / DSM 15464 / FAM18)).